The sequence spans 628 residues: Patulin synthase (628 aa).

Residues 1–20 form the signal peptide; it reads MRPIPSILGALGAFATLSAA. An N-linked (GlcNAc...) asparagine glycan is attached at N48. Residues 60–61 and 81–82 each bind FAD; these read TA and EA. N-linked (GlcNAc...) asparagine glycosylation is present at N92. FAD is bound at residue 147-150; it reads NYMA. N-linked (GlcNAc...) asparagine glycans are attached at residues N197, N260, N386, N429, and N486. The Proton acceptor role is filled by H564. FAD contacts are provided by residues A598 and 609–610; that span reads PQ.

It belongs to the GMC oxidoreductase family. Homodimer. It depends on FAD as a cofactor.

It is found in the cytoplasm. It localises to the cell cortex. Its subcellular location is the vacuole. The protein resides in the secreted. The protein localises to the cell wall. It carries out the reaction (E)-ascladiol + A = patulin + AH2. It participates in mycotoxin biosynthesis; patulin biosynthesis. In terms of biological role, patulin synthase; part of the gene cluster that mediates the biosynthesis of patulin, an acetate-derived tetraketide mycotoxin produced by several fungal species that shows antimicrobial properties against several bacteria. PatE catalyzes the last step of the pathway which is the conversion of E-ascladiol to patulin. The pathway begins with the synthesis of 6-methylsalicylic acid by the polyketide synthase (PKS) patK via condensation of acetate and malonate units. The 6-methylsalicylic acid decarboxylase patG then catalyzes the decarboxylation of 6-methylsalicylic acid to yield m-cresol (also known as 3-methylphenol). These first reactions occur in the cytosol. The intermediate m-cresol is then transported into the endoplasmic reticulum where the cytochrome P450 monooxygenase patH converts it to m-hydroxybenzyl alcohol, which is further converted to gentisyl alcohol by the cytochrome P450 monooxygenase patI. The oxidoreductases patJ and patO further convert gentisyl alcohol to isoepoxydon in the vacuole. PatN catalyzes then the transformation of isoepoxydon into phyllostine. The cluster protein patF is responsible for the conversion from phyllostine to neopatulin whereas the alcohol dehydrogenase patD converts neopatulin to E-ascladiol. The steps between isoepoxydon and E-ascladiol occur in the cytosol, and E-ascladiol is probably secreted to the extracellular space by one of the cluster-specific transporters patC or patM. Finally, the secreted patulin synthase patE catalyzes the conversion of E-ascladiol to patulin. In Aspergillus clavatus (strain ATCC 1007 / CBS 513.65 / DSM 816 / NCTC 3887 / NRRL 1 / QM 1276 / 107), this protein is Patulin synthase.